The sequence spans 307 residues: Beta-lactamase (307 aa).

Residues 1-34 (MRNRGFGRRELLVAMAMLVSVTGCARHASGARPA) constitute a signal peptide (tat-type signal). Ser-84 serves as the catalytic Acyl-ester intermediate. A substrate-binding site is contributed by Ser-142. The Proton acceptor role is filled by Glu-182. 251–253 (TGT) is a binding site for substrate.

It belongs to the class-A beta-lactamase family. As to quaternary structure, monomer. Post-translationally, exported by the Tat system. The position of the signal peptide cleavage has not been experimentally proven.

It localises to the periplasm. Its subcellular location is the secreted. The catalysed reaction is a beta-lactam + H2O = a substituted beta-amino acid. With respect to regulation, is inhibited by clavulanate. In terms of biological role, extended spectrum beta-lactamase (ESBL) that inactivates beta-lactam antibiotics by hydrolyzing the amide group of the beta-lactam ring. Displays high levels of penicillinase and cephalosporinase activity as well as measurable activity with carbapenems, including imipenem and meropenem. Plays a primary role in the intrinsic resistance of mycobacteria to beta-lactam antibiotics. This is Beta-lactamase (blaC) from Mycobacterium bovis (strain ATCC BAA-935 / AF2122/97).